Consider the following 226-residue polypeptide: PKHD-type hydroxylase Bind_0236 (226 aa).

A Fe2OG dioxygenase domain is found at 78 to 178 (TIFPPLFNRY…RIASFFWIQS (101 aa)). H96, D98, and H159 together coordinate Fe cation. R169 lines the 2-oxoglutarate pocket.

Fe(2+) is required as a cofactor. Requires L-ascorbate as cofactor.

This is PKHD-type hydroxylase Bind_0236 from Beijerinckia indica subsp. indica (strain ATCC 9039 / DSM 1715 / NCIMB 8712).